Consider the following 450-residue polypeptide: Glucose-6-phosphate isomerase (450 aa).

Thr-39 is modified (phosphothreonine). The active-site Proton donor is Glu-291. Residues His-312 and Lys-426 contribute to the active site.

This sequence belongs to the GPI family.

It localises to the cytoplasm. It carries out the reaction alpha-D-glucose 6-phosphate = beta-D-fructose 6-phosphate. Its pathway is carbohydrate biosynthesis; gluconeogenesis. It functions in the pathway carbohydrate degradation; glycolysis; D-glyceraldehyde 3-phosphate and glycerone phosphate from D-glucose: step 2/4. Catalyzes the reversible isomerization of glucose-6-phosphate to fructose-6-phosphate. This chain is Glucose-6-phosphate isomerase, found in Bacillus cytotoxicus (strain DSM 22905 / CIP 110041 / 391-98 / NVH 391-98).